A 431-amino-acid polypeptide reads, in one-letter code: Glutamyl-tRNA reductase (431 aa).

Substrate is bound by residues 49–52 (TCDR), Ser-109, 114–116 (EPH), and Gln-120. The active-site Nucleophile is the Cys-50. 189 to 194 (GTQEMG) serves as a coordination point for NADP(+).

This sequence belongs to the glutamyl-tRNA reductase family. In terms of assembly, homodimer.

It catalyses the reaction (S)-4-amino-5-oxopentanoate + tRNA(Glu) + NADP(+) = L-glutamyl-tRNA(Glu) + NADPH + H(+). Its pathway is porphyrin-containing compound metabolism; protoporphyrin-IX biosynthesis; 5-aminolevulinate from L-glutamyl-tRNA(Glu): step 1/2. It participates in porphyrin-containing compound metabolism; chlorophyll biosynthesis. Functionally, catalyzes the NADPH-dependent reduction of glutamyl-tRNA(Glu) to glutamate 1-semialdehyde (GSA). This Rhodospirillum rubrum (strain ATCC 11170 / ATH 1.1.1 / DSM 467 / LMG 4362 / NCIMB 8255 / S1) protein is Glutamyl-tRNA reductase.